The sequence spans 87 residues: Small ribosomal subunit protein bS20 (87 aa).

A compositionally biased stretch (basic residues) spans 1 to 22; the sequence is MANIKSAKKRAVQSEKRRKHNA. The interval 1-27 is disordered; sequence MANIKSAKKRAVQSEKRRKHNASSRSM.

Belongs to the bacterial ribosomal protein bS20 family.

Binds directly to 16S ribosomal RNA. This Pectobacterium atrosepticum (strain SCRI 1043 / ATCC BAA-672) (Erwinia carotovora subsp. atroseptica) protein is Small ribosomal subunit protein bS20.